Here is a 667-residue protein sequence, read N- to C-terminus: MTQEKKAEDLERGTDATSAVPRLWSTHCDGEVLLRLSKHGPGHETPMTIPELFQESAERFSAYPALASKNGKKWDTLTFSQYYEMCRKAAKSLIKLGLQRFQCVGILGFNSVEWVVTALGTILAGGLCVGIYATNSAEACQYVIQQANVSILIVENDQQLQKILLIPPDKMETVKAIVQYKLPLMESMANLYSWNDFMELGNDIPNIQLDRVILSQKANQCAVILYTSGTTGTPKGVLLSHDNITWTAGAMSQEMEINRVSGKQNTIVSYLPLSHIAAQLTDIWIPIKIGALTFFAQPDALRGTLVYTLQEVKPTLFMGVPRIWEKMQDTIKENVARSSRLRKKAFAWAKMLGLKVNTKRMLGKRDIPMNYRMAKALVFAKVRTSLGLDNCHAFFSSASPLSQDVSEFFLSLDIPIGEIYGMSECSGPHTVSNKSVYRVLSCGKVLSGCKNMLYNQNKEGVGEVCMWGRHVFMGYLNKEEATLEALDENGWLHSGDIGRLDSHDFLYITGRIKEILITAGGENVSPIPIETLVKEKIPIISHAMLVGDKAKFLCMLLTLKCETDRKSGEPLNKLSVEAKSFCQMLGSQATTVSDILKSRDQVVYTAIQYGIDIVNQQAMSDSHRIRKWIILEKDFSIQGGELGPTSKLKRSVITQKYKAQIDSMYLS.

Residues 227 to 235 (TSGTTGTPK), 418 to 423 (EIYGMS), D496, R511, and R624 contribute to the ATP site.

This sequence belongs to the ATP-dependent AMP-binding enzyme family. Bubblegum subfamily. Testis- and brainstem-specific. Expressed in pubertal and adult testis. Enriched in germ cells and Sertoli cells while present at a lower level in Leydig cells. Present in testicular Sertoli cells and large motoneurons in the medulla oblongata and cervical spinal cord (at protein level).

The protein resides in the cytoplasm. It is found in the membrane. The enzyme catalyses a long-chain fatty acid + ATP + CoA = a long-chain fatty acyl-CoA + AMP + diphosphate. The catalysed reaction is (5Z,8Z,11Z,14Z)-eicosatetraenoate + ATP + CoA = (5Z,8Z,11Z,14Z)-eicosatetraenoyl-CoA + AMP + diphosphate. It carries out the reaction hexadecanoate + ATP + CoA = hexadecanoyl-CoA + AMP + diphosphate. It catalyses the reaction (9Z)-octadecenoate + ATP + CoA = (9Z)-octadecenoyl-CoA + AMP + diphosphate. The enzyme catalyses (9Z,12Z)-octadecadienoate + ATP + CoA = (9Z,12Z)-octadecadienoyl-CoA + AMP + diphosphate. The catalysed reaction is tetracosanoate + ATP + CoA = tetracosanoyl-CoA + AMP + diphosphate. Catalyzes the conversion of fatty acids such as long chain and very long-chain fatty acids to their active form acyl-CoAs for both synthesis of cellular lipids, and degradation via beta-oxidation. Can activate diverse saturated, monosaturated and polyunsaturated fatty acids. Has increased ability to activate oleic and linoleic acid. May play a role in spermatogenesis. This Mus musculus (Mouse) protein is Long-chain-fatty-acid--CoA ligase ACSBG2.